A 48-amino-acid chain; its full sequence is Small, acid-soluble spore protein P (48 aa).

Positions 1-19 are enriched in basic and acidic residues; the sequence is MTNKNTGKDIRQNSPKEHQ. The tract at residues 1–48 is disordered; it reads MTNKNTGKDIRQNSPKEHQSGQPEPLSGSKKVKNRNHTRQKHNSHHDM. Positions 30 to 48 are enriched in basic residues; sequence KKVKNRNHTRQKHNSHHDM.

This sequence belongs to the SspP family.

The protein localises to the spore core. The polypeptide is Small, acid-soluble spore protein P (Bacillus pumilus (strain SAFR-032)).